The primary structure comprises 276 residues: Large ribosomal subunit protein uL2 (276 aa).

Disordered stretches follow at residues 1–20 (MGIKKYNPTTNGRRNMTTND) and 219–276 (TVRG…RRKK). Over residues 7–20 (NPTTNGRRNMTTND) the composition is skewed to polar residues.

This sequence belongs to the universal ribosomal protein uL2 family. Part of the 50S ribosomal subunit. Forms a bridge to the 30S subunit in the 70S ribosome.

One of the primary rRNA binding proteins. Required for association of the 30S and 50S subunits to form the 70S ribosome, for tRNA binding and peptide bond formation. It has been suggested to have peptidyltransferase activity; this is somewhat controversial. Makes several contacts with the 16S rRNA in the 70S ribosome. This Bacillus mycoides (strain KBAB4) (Bacillus weihenstephanensis) protein is Large ribosomal subunit protein uL2.